We begin with the raw amino-acid sequence, 65 residues long: uncharacterized protein (65 aa).

The first 22 residues, 1–22, serve as a signal peptide directing secretion; it reads MKFIKLFTFLVYLFVTLTNVFA.

This is an uncharacterized protein from Invertebrate iridescent virus 6 (IIV-6).